Reading from the N-terminus, the 205-residue chain is Macrophage immunometabolism regulator (205 aa).

A disordered region spans residues 1–40 (MEVDINGVNRTNNSVPSTTEGSSPSKPDPEKPRCSSTPCS). The segment covering 8–25 (VNRTNNSVPSTTEGSSPS) has biased composition (polar residues).

This sequence belongs to the UNC119-binding protein family. Interacts with unc119 family proteins; interaction preferentially takes place when unc119 proteins are unliganded with myristoylated proteins.

The protein localises to the cytoplasm. It is found in the cell projection. Its subcellular location is the cilium. In terms of biological role, may play a role in immune regulation through regulation of the macrophage function. May also play a role in trafficking of proteins via its interaction with unc119 family cargo adapters. May play a role in ciliary membrane localization. This is Macrophage immunometabolism regulator (macir) from Xenopus tropicalis (Western clawed frog).